The primary structure comprises 359 residues: Peptide chain release factor 1 (359 aa).

Residue Q235 is modified to N5-methylglutamine. Basic and acidic residues predominate over residues 283–294 (SKADEERSESRK). The tract at residues 283 to 309 (SKADEERSESRKSQVGSGDRSERIRTY) is disordered.

The protein belongs to the prokaryotic/mitochondrial release factor family. Methylated by PrmC. Methylation increases the termination efficiency of RF1.

The protein localises to the cytoplasm. Peptide chain release factor 1 directs the termination of translation in response to the peptide chain termination codons UAG and UAA. The chain is Peptide chain release factor 1 from Mesorhizobium japonicum (strain LMG 29417 / CECT 9101 / MAFF 303099) (Mesorhizobium loti (strain MAFF 303099)).